Here is a 488-residue protein sequence, read N- to C-terminus: Elongation factor Tu, chloroplastic (488 aa).

The disordered stretch occupies residues 1 to 20 (MALSSTAATTSSKLKLSNPP). A chloroplast-targeting transit peptide spans 1–79 (MALSSTAATT…RPSSSPFTVR (79 aa)). The tr-type G domain maps to 89–293 (KPHLNIGTIG…EVDKYIPIPQ (205 aa)). The tract at residues 98–105 (GHVDHGKT) is G1. Residue 98-105 (GHVDHGKT) coordinates GTP. Residues 139–143 (GITIN) form a G2 region. Residues 160–163 (DCPG) are G3. GTP is bound by residues 160 to 164 (DCPGH) and 215 to 218 (NKQD). Residues 215–218 (NKQD) are G4. Positions 253–255 (SAL) are G5.

The protein belongs to the TRAFAC class translation factor GTPase superfamily. Classic translation factor GTPase family. EF-Tu/EF-1A subfamily. Higher expression in leaves than in roots.

The protein resides in the plastid. It localises to the chloroplast. In terms of biological role, this protein promotes the GTP-dependent binding of aminoacyl-tRNA to the A-site of ribosomes during protein biosynthesis. The protein is Elongation factor Tu, chloroplastic (tufA) of Pisum sativum (Garden pea).